A 611-amino-acid polypeptide reads, in one-letter code: Protein Pixie (611 aa).

2 consecutive 4Fe-4S ferredoxin-type domains span residues 15-45 (RIAIVSDDKCKPKRCRQECKKTCPVVRMGKL) and 54-83 (KIASLSEELCIGCGICVKKCPFEAITIINL). ABC transporter domains follow at residues 78 to 323 (ITII…FLDG) and 350 to 570 (IKRM…LELL). ATP contacts are provided by residues 118–125 (GQNGIGKS) and 387–394 (GENGTGKT).

It belongs to the ABC transporter superfamily. ABCE family. As to quaternary structure, interacts with components of eIF3 complex, namely eIF3a, eIF3j, eIF3b, eIF3c and eIF3i. Associates with the 40S ribosome subunit in an ATP-dependent manner and independently from the presence of the eIF3 complex. Forms a complex with Git and Pak; the interaction with Pak may be mediated by pix/dPIX. In terms of processing, ubiquitinated by Cnot4. Ubiquitination mediates the recruitment of autophagy receptors to the mitochondrial outer membrane and initiates mitophagy. Expressed in early and late larval imaginal disks (at protein level).

It is found in the cytoplasm. Its function is as follows. Plays a role in translation initiation and quality control of translation. Together with pelo and HBS1, is required for 48S complex formation from 80S ribosomes and dissociation of vacant 80S ribosomes. Stabilizes core components of eIF3 complex promoting their assembly into translation initiation-competent complexes. Together with pelo and HBS1, recognizes stalled ribosomes and promotes dissociation of elongation complexes assembled on non-stop mRNAs; this triggers endonucleolytic cleavage of the mRNA, a mechanism to release non-functional ribosomes and to degrade damaged mRNAs as part of the No-Go Decay (NGD) pathway. Plays a role in the regulation of mRNA turnover. Plays a role in quality control of translation of mitochondrial outer membrane-localized mRNA. As part of the Pink1-regulated signaling, ubiquitinated by Cnot4 upon mitochondria damage; this modification generates polyubiquitin signals that recruits autophagy receptors to the mitochondrial outer membrane to initiate mitophagy. Required in the wing disk for cell division and growth as well as cell survival. During muscle embryogenesis, required for the recruitment of Pak to muscle attachments in the embryo, hence may play a role in proper muscle morphogenesis and proper guidance and targeting of subsets of myotubes. This chain is Protein Pixie, found in Drosophila melanogaster (Fruit fly).